We begin with the raw amino-acid sequence, 231 residues long: Large ribosomal subunit protein uL1 (231 aa).

The protein belongs to the universal ribosomal protein uL1 family. Part of the 50S ribosomal subunit.

In terms of biological role, binds directly to 23S rRNA. The L1 stalk is quite mobile in the ribosome, and is involved in E site tRNA release. Its function is as follows. Protein L1 is also a translational repressor protein, it controls the translation of the L11 operon by binding to its mRNA. The polypeptide is Large ribosomal subunit protein uL1 (Azoarcus sp. (strain BH72)).